A 61-amino-acid polypeptide reads, in one-letter code: UPF0434 protein PSEEN1604 (61 aa).

The protein belongs to the UPF0434 family.

This Pseudomonas entomophila (strain L48) protein is UPF0434 protein PSEEN1604.